Consider the following 323-residue polypeptide: Arginase (323 aa).

H119, D142, H144, and D146 together coordinate Mn(2+). Substrate contacts are provided by residues 144 to 148 (HADIN), 155 to 157 (SKN), and D198. Residues D247 and D249 each contribute to the Mn(2+) site. Positions 261 and 292 each coordinate substrate.

Belongs to the arginase family. As to quaternary structure, homotrimer. Mn(2+) serves as cofactor.

The catalysed reaction is L-arginine + H2O = urea + L-ornithine. The protein operates within nitrogen metabolism; urea cycle; L-ornithine and urea from L-arginine: step 1/1. The sequence is that of Arginase (aru1) from Schizosaccharomyces pombe (strain 972 / ATCC 24843) (Fission yeast).